The sequence spans 180 residues: Insertion element IS1296 uncharacterized 21.4 kDa protein (180 aa).

It belongs to the IS150/IS1296 orfA family.

The polypeptide is Insertion element IS1296 uncharacterized 21.4 kDa protein (Mycoplasma mycoides subsp. mycoides SC).